The following is a 966-amino-acid chain: Serine/threonine-protein kinase 10 (966 aa).

2 positions are modified to phosphoserine: serine 13 and serine 20. The Protein kinase domain maps to 36–294; it reads WEIVGELGDG…AAQLLQHPFV (259 aa). Residues 42–50 and lysine 65 contribute to the ATP site; that span reads LGDGAFGKV. Catalysis depends on aspartate 157, which acts as the Proton acceptor. The activation segment stretch occupies residues 175–224; the sequence is DFGVSAKNLKTLQKRDSFIGTPYWMAPEVVLCETMKDAPYDYKADIWSLG. Threonine 185 bears the Phosphothreonine; by autocatalysis mark. Serine 191 is subject to Phosphoserine. Composition is skewed to polar residues over residues 341-363 and 371-392; these read TQDSANVTQPSLDSNKLLQDSST and QEPVSGSCSQPSGDGPLQTTSP. A disordered region spans residues 341–497; that stretch reads TQDSANVTQP…NLSTSESMDY (157 aa). Basic and acidic residues predominate over residues 421-430; it reads IQMDEEKQIP. Serine 437, serine 449, serine 453, and serine 484 each carry phosphoserine. Positions 438-456 are enriched in polar residues; that stretch reads PAASKSQKANQSRPNSSAL. A compositionally biased stretch (polar residues) spans 485–497; sequence DCSNLSTSESMDY. Phosphoserine occurs at positions 513 and 548. Residues 588 to 936 are a coiled coil; it reads LQLEQMHKRF…LNQKKREQEM (349 aa). 3 disordered regions span residues 660–692, 826–865, and 901–966; these read KKEVKSEVEKLPRQQRKESMKQKMEEHSQKKQR, INGAGSASEQREKIKQFSQQEEKRQKAERLQQQQKHENQM, and LDES…GDAS. Composition is skewed to basic and acidic residues over residues 834–865 and 901–946; these read EQREKIKQFSQQEEKRQKAERLQQQQKHENQM and LDES…EAEP. At threonine 950 the chain carries Phosphothreonine. The span at 950-966 shows a compositional bias: polar residues; it reads TPSKASNFFPYSSGDAS.

It belongs to the protein kinase superfamily. STE Ser/Thr protein kinase family. STE20 subfamily. In terms of assembly, homodimer; homodimerization is required for activation segment autophosphorylation. Autophosphorylates following homodimerization, leading to activation of the protein. As to expression, expressed predominantly in lymphoid organs such as spleen, thymus, and bone marrow.

It is found in the cell membrane. It carries out the reaction L-seryl-[protein] + ATP = O-phospho-L-seryl-[protein] + ADP + H(+). The catalysed reaction is L-threonyl-[protein] + ATP = O-phospho-L-threonyl-[protein] + ADP + H(+). Its activity is regulated as follows. Inhibited by the pyrrole-indolinone inhibitor SU11274 (K00593): intercalates between the ATP-binding Lys-65 and alpha-C glutamate (Glu-81), resulting in a partial disordering of the lysine side chain. Also specifically inhibited by erlotinib. Slightly inhibited by gefitinib. In terms of biological role, serine/threonine-protein kinase involved in regulation of lymphocyte migration. Phosphorylates MSN, and possibly PLK1. Involved in regulation of lymphocyte migration by mediating phosphorylation of ERM proteins such as MSN. Acts as a negative regulator of MAP3K1/MEKK1. May also act as a cell cycle regulator by acting as a polo kinase kinase: mediates phosphorylation of PLK1 in vitro; however such data require additional evidences in vivo. This chain is Serine/threonine-protein kinase 10 (Stk10), found in Mus musculus (Mouse).